We begin with the raw amino-acid sequence, 696 residues long: Polyribonucleotide nucleotidyltransferase (696 aa).

Mg(2+)-binding residues include Asp-486 and Asp-492. The KH domain occupies 553 to 612 (PRIIVRNIPKDRIGELIGPGGKNVRGISELTGAELYIEDDGRVTISGSNQESAEKAAKMV). An S1 motif domain is found at 622–690 (GKIYEGKVKR…KTGKIDLSRK (69 aa)).

This sequence belongs to the polyribonucleotide nucleotidyltransferase family. The cofactor is Mg(2+).

It localises to the cytoplasm. The enzyme catalyses RNA(n+1) + phosphate = RNA(n) + a ribonucleoside 5'-diphosphate. Functionally, involved in mRNA degradation. Catalyzes the phosphorolysis of single-stranded polyribonucleotides processively in the 3'- to 5'-direction. The protein is Polyribonucleotide nucleotidyltransferase of Leptospira borgpetersenii serovar Hardjo-bovis (strain L550).